Consider the following 269-residue polypeptide: Protein OPG079 (269 aa).

The protein belongs to the orthopoxvirus OPG079 family. Homoomultimer (Potential). Interacts with the small subunit of ribonucleotide reductase. Interacts with host FAM111A; this interaction protomtes OPG079 degradation through autophagy.

It localises to the host cytoplasm. Plays an essential role in viral DNA replication. Binds to ssDNA with high affinity and localizes to cytoplasmic factories where nascent viral genomes accumulate. May disrupt loops, hairpins and other secondary structures present on ssDNA to reduce and eliminate pausing of viral DNA polymerase at specific sites during elongation. The chain is Protein OPG079 (OPG079) from Vaccinia virus (strain Copenhagen) (VACV).